The chain runs to 88 residues: Cuticle protein 70, isoforms A and B (88 aa).

5 repeat units span residues 7-10, 48-51, 55-58, 60-63, and 66-69.

Functionally, component of the cuticle of migratory locust which contains more than 100 different structural proteins. This is Cuticle protein 70, isoforms A and B from Locusta migratoria (Migratory locust).